The following is a 301-amino-acid chain: m7GpppX diphosphatase (301 aa).

Substrate contacts are provided by residues glutamate 154, lysine 176, and 237–248 (HYQPSFYHLHVH). A Histidine triad motif motif is present at residues 244 to 248 (HLHVH). Catalysis depends on histidine 246, which acts as the Nucleophile.

It belongs to the HIT family.

Its subcellular location is the nucleus. It carries out the reaction a 5'-end (N(7)-methyl 5'-triphosphoguanosine)-ribonucleoside in mRNA + H2O = N(7)-methyl-GMP + a 5'-end diphospho-ribonucleoside in mRNA + 2 H(+). The enzyme catalyses a 5'-end (N(2),N(2),N(7)-trimethyl 5'-triphosphoguanosine)-ribonucleoside in mRNA + H2O = (N(2),N(2),N(7))-trimethyl-GMP + a 5'-end diphospho-ribonucleoside in mRNA + 2 H(+). Its activity is regulated as follows. The hydrolytic product 7-methylguanosine diphosphate (m7GDP) efficiently inhibits the decapping scavenger activity and acts as a competitive inhibitor in vitro. Its function is as follows. Decapping scavenger enzyme that catalyzes the cleavage of a residual cap structure following the degradation of mRNAs of the 3'-&gt;5' exosome-mediated mRNA decay pathway. Hydrolyzes cap analog structures like 7-methylguanosine nucleoside triphosphate (m7GpppG) and tri-methyl guanosine nucleoside triphosphate (m3(2,2,7)GpppG) with up to 2 nucleotide substrates (small capped oligoribonucleotides) and specifically releases 5'-phosphorylated RNA fragments and 7-methylguanosine monophosphate (m7GMP). Does not hydrolyze unmethylated cap analog (GpppG) and shows no decapping activity on intact m7GpppG-capped mRNA molecules. Does not hydrolyze 7-methylguanosine diphosphate (m7GDP) and tri-methylguanosine diphosphate (m3(2,2,7)GDP) to m(7)GMP and m3(2,2,7)GMP, respectively. May also play a role in the 5'-&gt;3 mRNA decay pathway; m7GDP, the downstream product released by the 5'-&gt;3' mRNA mediated decapping activity, may be also converted by dcs-1 to m7GMP. Binds to m7GpppG and strongly to m7GDP. The sequence is that of m7GpppX diphosphatase from Ascaris suum (Pig roundworm).